A 496-amino-acid chain; its full sequence is Lysine--tRNA ligase (496 aa).

Residues Glu409 and Glu416 each coordinate Mg(2+).

It belongs to the class-II aminoacyl-tRNA synthetase family. In terms of assembly, homodimer. Requires Mg(2+) as cofactor.

The protein localises to the cytoplasm. The catalysed reaction is tRNA(Lys) + L-lysine + ATP = L-lysyl-tRNA(Lys) + AMP + diphosphate. This chain is Lysine--tRNA ligase, found in Streptococcus agalactiae serotype III (strain NEM316).